The chain runs to 90 residues: Darcynin 1 (90 aa).

Belongs to the darcynin family.

The sequence is that of Darcynin 1 from Acinetobacter baumannii (strain ATCC 17978 / DSM 105126 / CIP 53.77 / LMG 1025 / NCDC KC755 / 5377).